The primary structure comprises 429 residues: Choline kinase A2 (429 aa).

ATP-binding positions include 82–88, Arg111, 152–158, and Gln257; these read KGGMSNM and EYIPSRP. 84-86 contacts substrate; that stretch reads GMS. Glu258 serves as a coordination point for Ca(2+). Asp301 contacts ATP. Positions 320 and 323 each coordinate Ca(2+).

This sequence belongs to the choline/ethanolamine kinase family. As to quaternary structure, homodimer. A small proportion exists as higher oligomers. Mg(2+) serves as cofactor.

It catalyses the reaction choline + ATP = phosphocholine + ADP + H(+). The enzyme catalyses ethanolamine + ATP = phosphoethanolamine + ADP + H(+). It participates in phospholipid metabolism; phosphatidylcholine biosynthesis; phosphocholine from choline: step 1/1. The protein operates within phospholipid metabolism; phosphatidylethanolamine biosynthesis; phosphatidylethanolamine from ethanolamine: step 1/3. With respect to regulation, inhibited by Ca(2+). Mild inhibition by high levels of Mg(2+)(&gt;10 mM). Its function is as follows. Catalyzes the first step in phosphatidylcholine biosynthesis. May contribute to phosphatidylethanolamine biosynthesis. Phosphorylates choline and ethanolamine but the activity is much higher with choline. The protein is Choline kinase A2 of Caenorhabditis elegans.